We begin with the raw amino-acid sequence, 701 residues long: UvrABC system protein B (701 aa).

The 388-residue stretch at 35-422 (RRIQGGAADT…GGDVVEQVIR (388 aa)) folds into the Helicase ATP-binding domain. 48 to 55 (GATGTGKT) provides a ligand contact to ATP. The Beta-hairpin motif lies at 101–124 (YYDYYQPEAYVPQTDTYIEKDSSI). Positions 439-605 (QIDDLVHEIR…PLRKKIADIL (167 aa)) constitute a Helicase C-terminal domain. The interval 620 to 648 (ARSRGEKRGTPTPRSGALSGPDRVAEQAK) is disordered. The 36-residue stretch at 656–691 (AALVEQLTEQMHQAAADLQFELAARLRDEIKELKRE) folds into the UVR domain.

Belongs to the UvrB family. As to quaternary structure, forms a heterotetramer with UvrA during the search for lesions. Interacts with UvrC in an incision complex.

It localises to the cytoplasm. The UvrABC repair system catalyzes the recognition and processing of DNA lesions. A damage recognition complex composed of 2 UvrA and 2 UvrB subunits scans DNA for abnormalities. Upon binding of the UvrA(2)B(2) complex to a putative damaged site, the DNA wraps around one UvrB monomer. DNA wrap is dependent on ATP binding by UvrB and probably causes local melting of the DNA helix, facilitating insertion of UvrB beta-hairpin between the DNA strands. Then UvrB probes one DNA strand for the presence of a lesion. If a lesion is found the UvrA subunits dissociate and the UvrB-DNA preincision complex is formed. This complex is subsequently bound by UvrC and the second UvrB is released. If no lesion is found, the DNA wraps around the other UvrB subunit that will check the other stand for damage. The protein is UvrABC system protein B of Thermobifida fusca (strain YX).